A 382-amino-acid chain; its full sequence is Sphingoid long-chain base transporter RSB1 (382 aa).

At Met-1–Arg-34 the chain is on the extracellular side. 2 N-linked (GlcNAc...) asparagine glycosylation sites follow: Asn-3 and Asn-6. The chain crosses the membrane as a helical span at residues Phe-35–Leu-55. At Met-56–Arg-57 the chain is on the cytoplasmic side. Residues Gln-58–Gly-78 traverse the membrane as a helical segment. Residues Arg-79–Asp-90 lie on the Extracellular side of the membrane. The chain crosses the membrane as a helical span at residues Ala-91–Tyr-111. Residues Tyr-112–Ser-135 are Cytoplasmic-facing. Residues Phe-136 to Cys-156 traverse the membrane as a helical segment. The Extracellular segment spans residues Gly-157–His-171. A helical transmembrane segment spans residues Val-172–Phe-192. Over His-193–Arg-241 the chain is Cytoplasmic. Residues Trp-242–Cys-262 form a helical membrane-spanning segment. Over Cys-263–Glu-281 the chain is Extracellular. A helical transmembrane segment spans residues Trp-282–Phe-302. Residues His-303 to Leu-382 are Cytoplasmic-facing.

It belongs to the lipid-translocating exporter (LTE) (TC 9.A.26.1) family.

It is found in the cell membrane. Catalyzes the ATP-dependent translocation of sphingoid long-chain bases (LCBs) from the cytoplasmic site toward the extracytoplasmic side of the membrane (flip-flop). Involved in the establishment of the functional lipid asymmetry of the plasma membrane. Regulates intracellular levels of LCBs, sphingolipid precursors that are growth inhibitory at increased levels. This is Sphingoid long-chain base transporter RSB1 (RSB1) from Saccharomyces cerevisiae (strain JAY291) (Baker's yeast).